A 316-amino-acid polypeptide reads, in one-letter code: Olfactory receptor 6B9 (316 aa).

Residues 1–22 (MENITNISEFILMGFPTAPWLQ) lie on the Extracellular side of the membrane. Residues asparagine 3 and asparagine 6 are each glycosylated (N-linked (GlcNAc...) asparagine). The chain crosses the membrane as a helical span at residues 23–43 (ILLFSIFFITYVFVLLENLVI). Topologically, residues 44–64 (ILTVWVTGSLHKPMYYFLSTM) are cytoplasmic. Residues 65-85 (SFLEAWYISVTVPKMLAGFLF) form a helical membrane-spanning segment. The Extracellular segment spans residues 86–97 (RPNTISFLGCMT). Cysteine 95 and cysteine 187 are joined by a disulfide. A helical transmembrane segment spans residues 98-118 (QLYFFMSLACTECVLLAAMAY). Residues 119–132 (DRYVAICWPLRYPV) lie on the Cytoplasmic side of the membrane. The chain crosses the membrane as a helical span at residues 133 to 153 (MMTTGFCVQLTISSWVSGFTI). Residues 154-199 (SMAKVYFISRVAFCGNNVLNHFFCDVSPILKLACMNLSMAETVDFA) lie on the Extracellular side of the membrane. The helical transmembrane segment at 200–220 (LAIVILIFPLSATVLSYGFIV) threads the bilayer. Residues 221–237 (STVLQIPSATGQRKAFS) are Cytoplasmic-facing. Residues 238 to 258 (TCASHLTVVVIFYTAVIFMYV) traverse the membrane as a helical segment. Residues 259–269 (RPRAIASFNSN) are Extracellular-facing. A helical membrane pass occupies residues 270–290 (KLISAIYAVFTPMLNPIIYCL). The Cytoplasmic portion of the chain corresponds to 291 to 316 (RNKEVKDAIRKTIAGGRAPALGESIS).

Belongs to the G-protein coupled receptor 1 family. In terms of tissue distribution, olfactory epithelium.

It localises to the cell membrane. Its function is as follows. Odorant receptor. This chain is Olfactory receptor 6B9, found in Mus musculus (Mouse).